The following is an 816-amino-acid chain: Leucine--tRNA ligase (816 aa).

A 'HIGH' region motif is present at residues 40 to 51 (SYPSGSQLHAGH). The 'KMSKS' region signature appears at 576 to 580 (KMSKS). An ATP-binding site is contributed by K579.

It belongs to the class-I aminoacyl-tRNA synthetase family.

It is found in the cytoplasm. It catalyses the reaction tRNA(Leu) + L-leucine + ATP = L-leucyl-tRNA(Leu) + AMP + diphosphate. This is Leucine--tRNA ligase from Clostridium perfringens (strain 13 / Type A).